The primary structure comprises 475 residues: Ribulose bisphosphate carboxylase large chain (475 aa).

A propeptide spanning residues Met-1–Ser-2 is cleaved from the precursor. At Pro-3 the chain carries N-acetylproline. Lys-14 carries the N6,N6,N6-trimethyllysine modification. Substrate is bound by residues Asn-123 and Thr-173. The active-site Proton acceptor is the Lys-175. Lys-177 serves as a coordination point for substrate. Mg(2+) is bound by residues Lys-201, Asp-203, and Glu-204. Lys-201 is modified (N6-carboxylysine). His-294 functions as the Proton acceptor in the catalytic mechanism. Arg-295, His-327, and Ser-379 together coordinate substrate.

The protein belongs to the RuBisCO large chain family. Type I subfamily. In terms of assembly, heterohexadecamer of 8 large chains and 8 small chains; disulfide-linked. The disulfide link is formed within the large subunit homodimers. Requires Mg(2+) as cofactor. Post-translationally, the disulfide bond which can form in the large chain dimeric partners within the hexadecamer appears to be associated with oxidative stress and protein turnover.

It localises to the plastid. Its subcellular location is the chloroplast. It carries out the reaction 2 (2R)-3-phosphoglycerate + 2 H(+) = D-ribulose 1,5-bisphosphate + CO2 + H2O. The enzyme catalyses D-ribulose 1,5-bisphosphate + O2 = 2-phosphoglycolate + (2R)-3-phosphoglycerate + 2 H(+). Functionally, ruBisCO catalyzes two reactions: the carboxylation of D-ribulose 1,5-bisphosphate, the primary event in carbon dioxide fixation, as well as the oxidative fragmentation of the pentose substrate in the photorespiration process. Both reactions occur simultaneously and in competition at the same active site. This chain is Ribulose bisphosphate carboxylase large chain, found in Populus trichocarpa (Western balsam poplar).